Reading from the N-terminus, the 249-residue chain is DNA polymerase sliding clamp (249 aa).

It belongs to the PCNA family. As to quaternary structure, homotrimer. The subunits circularize to form a toroid; DNA passes through its center. Replication factor C (RFC) is required to load the toroid on the DNA.

Its function is as follows. Sliding clamp subunit that acts as a moving platform for DNA processing. Responsible for tethering the catalytic subunit of DNA polymerase and other proteins to DNA during high-speed replication. In Thermococcus fumicolans, this protein is DNA polymerase sliding clamp.